The primary structure comprises 91 residues: Teretoxin Tan6.2 (91 aa).

Residues Met1 to Leu21 form the signal peptide. A propeptide spanning residues Gly22 to Lys50 is cleaved from the precursor.

The protein belongs to the teretoxin M (TM) superfamily. Post-translationally, contains 3 disulfide bonds. In terms of tissue distribution, expressed by the venom duct.

The protein localises to the secreted. In Terebra anilis (Auger snail), this protein is Teretoxin Tan6.2.